The sequence spans 315 residues: Melanocyte-stimulating hormone receptor (315 aa).

Residues 1–35 (MSTQEPQKSLLGSLNSNATSHLGLATNQSEPWCLY) lie on the Extracellular side of the membrane. Residues Asn17 and Asn27 are each glycosylated (N-linked (GlcNAc...) asparagine). Residues 36-61 (VSIPDGLFLSLGLVSLVENVLVVIAI) traverse the membrane as a helical segment. Topologically, residues 62 to 70 (TKNRNLHSP) are cytoplasmic. A helical membrane pass occupies residues 71-91 (MYYFICCLALSDLMVSVSIVL). Over 92–116 (ETTIILLLEAGILVARVALVQQLDN) the chain is Extracellular. Residues 117–138 (LIDVLICGSMVSSLCFLGIIAI) form a helical membrane-spanning segment. The Cytoplasmic segment spans residues 139 to 161 (DRYISIFYALRYHSIVTLPRARR). The helical transmembrane segment at 162–181 (AVVGIWMVSIVSSTLFITYY) threads the bilayer. Residues 182–189 (KHTAVLLC) are Extracellular-facing. The chain crosses the membrane as a helical span at residues 190–209 (LVTFFLAMLALMAILYAHMF). Residues 210 to 238 (TRACQHAQGIAQLHKRRRSIRQGFCLKGA) are Cytoplasmic-facing. The helical transmembrane segment at 239 to 264 (ATLTILLGIFFLCWGPFFLHLLLIVL) threads the bilayer. The Extracellular portion of the chain corresponds to 265–277 (CPQHPTCSCIFKN). A helical membrane pass occupies residues 278–298 (FNLFLLLIVLSSTVDPLIYAF). Over 299-315 (RSQELRMTLKEVLLCSW) the chain is Cytoplasmic. Cys313 is lipidated: S-palmitoyl cysteine.

Belongs to the G-protein coupled receptor 1 family. In terms of assembly, interacts with MGRN1, but does not undergo MGRN1-mediated ubiquitination; this interaction competes with GNAS-binding and thus inhibits agonist-induced cAMP production. Interacts with OPN3; the interaction results in a decrease in MC1R-mediated cAMP signaling and ultimately a decrease in melanin production in melanocytes.

The protein resides in the cell membrane. Receptor for MSH (alpha, beta and gamma) and ACTH. The activity of this receptor is mediated by G proteins which activate adenylate cyclase. Mediates melanogenesis, the production of eumelanin (black/brown) and phaeomelanin (red/yellow), via regulation of cAMP signaling in melanocytes. The polypeptide is Melanocyte-stimulating hormone receptor (Mc1r) (Mus musculus (Mouse)).